A 730-amino-acid polypeptide reads, in one-letter code: Trimethylamine dehydrogenase (730 aa).

The FMN site is built by Pro-29, Cys-31, Tyr-61, and Glu-104. The residue at position 31 (Cys-31) is an S-6-FMN cysteine. Tyr-170–His-173 contributes to the substrate binding site. The Proton donor role is filled by Tyr-175. FMN is bound by residues Arg-223, Asp-268, Arg-300, Ala-322, and Arg-323. Residues Cys-346, Cys-349, Cys-352, and Cys-365 each coordinate [4Fe-4S] cluster. ADP-binding residues include Ser-401, Asp-420, Thr-421, His-428, Met-471, and Asp-675.

In the N-terminal section; belongs to the NADH:flavin oxidoreductase/NADH oxidase family. As to quaternary structure, homodimer. Forms a ternary complex with the heterodimeric electron transfer flavoprotein. The cofactor is FMN. [4Fe-4S] cluster is required as a cofactor.

It carries out the reaction trimethylamine + oxidized [electron-transfer flavoprotein] + H2O + H(+) = dimethylamine + reduced [electron-transfer flavoprotein] + formaldehyde. This Methylophilus methylotrophus (Bacterium W3A1) protein is Trimethylamine dehydrogenase.